The primary structure comprises 118 residues: Small ribosomal subunit protein uS13 (118 aa).

Residues 94–118 (SLPLRGQRTKTNARTRKGPRKPIRK) are disordered.

It belongs to the universal ribosomal protein uS13 family. In terms of assembly, part of the 30S ribosomal subunit. Forms a loose heterodimer with protein S19. Forms two bridges to the 50S subunit in the 70S ribosome.

Functionally, located at the top of the head of the 30S subunit, it contacts several helices of the 16S rRNA. In the 70S ribosome it contacts the 23S rRNA (bridge B1a) and protein L5 of the 50S subunit (bridge B1b), connecting the 2 subunits; these bridges are implicated in subunit movement. Contacts the tRNAs in the A and P-sites. The protein is Small ribosomal subunit protein uS13 of Shewanella frigidimarina (strain NCIMB 400).